The primary structure comprises 248 residues: NH(3)-dependent NAD(+) synthetase (248 aa).

31-38 provides a ligand contact to ATP; the sequence is GLSGGVDS. Asp-37 contributes to the Mg(2+) binding site. Deamido-NAD(+) is bound at residue Arg-114. Thr-134 contributes to the ATP binding site. Residue Glu-139 participates in Mg(2+) binding. Lys-147 and Asp-154 together coordinate deamido-NAD(+). ATP contacts are provided by Lys-163 and Thr-185. A deamido-NAD(+)-binding site is contributed by 232–233; it reads HK.

This sequence belongs to the NAD synthetase family. As to quaternary structure, homodimer.

The catalysed reaction is deamido-NAD(+) + NH4(+) + ATP = AMP + diphosphate + NAD(+) + H(+). Its pathway is cofactor biosynthesis; NAD(+) biosynthesis; NAD(+) from deamido-NAD(+) (ammonia route): step 1/1. Catalyzes the ATP-dependent amidation of deamido-NAD to form NAD. Uses ammonia as a nitrogen source. This Mycoplasma pneumoniae (strain ATCC 29342 / M129 / Subtype 1) (Mycoplasmoides pneumoniae) protein is NH(3)-dependent NAD(+) synthetase.